Here is an 893-residue protein sequence, read N- to C-terminus: UPF0182 protein CLB_0018 (893 aa).

A run of 7 helical transmembrane segments spans residues 9 to 29 (IPLF…NFII), 49 to 69 (AIII…WMYY), 94 to 114 (LFFI…SSSY), 154 to 174 (VIIS…FILE), 202 to 222 (LAIV…IKIW), 246 to 266 (FYKI…LSIV), and 273 to 293 (VSIC…ASFL).

The protein belongs to the UPF0182 family.

The protein localises to the cell membrane. The chain is UPF0182 protein CLB_0018 from Clostridium botulinum (strain ATCC 19397 / Type A).